A 343-amino-acid chain; its full sequence is tRNA N6-adenosine threonylcarbamoyltransferase (343 aa).

Fe cation-binding residues include H120 and H124. Substrate-binding positions include 142–146, D175, G188, D192, and N281; that span reads VVSGG. D309 serves as a coordination point for Fe cation.

Belongs to the KAE1 / TsaD family. Fe(2+) serves as cofactor.

It is found in the cytoplasm. It carries out the reaction L-threonylcarbamoyladenylate + adenosine(37) in tRNA = N(6)-L-threonylcarbamoyladenosine(37) in tRNA + AMP + H(+). Required for the formation of a threonylcarbamoyl group on adenosine at position 37 (t(6)A37) in tRNAs that read codons beginning with adenine. Is involved in the transfer of the threonylcarbamoyl moiety of threonylcarbamoyl-AMP (TC-AMP) to the N6 group of A37, together with TsaE and TsaB. TsaD likely plays a direct catalytic role in this reaction. In Halalkalibacterium halodurans (strain ATCC BAA-125 / DSM 18197 / FERM 7344 / JCM 9153 / C-125) (Bacillus halodurans), this protein is tRNA N6-adenosine threonylcarbamoyltransferase.